We begin with the raw amino-acid sequence, 534 residues long: UDP-glucuronosyltransferase 1A3 (534 aa).

A signal peptide spans 1–28 (MATGLQVPLPWLATGLLLLLSVQPWAES). Residues Asn119, Asn142, Asn296, and Asn348 are each glycosylated (N-linked (GlcNAc...) asparagine). A helical transmembrane segment spans residues 492 to 508 (VIGFLLAVVLTVAFITF).

Belongs to the UDP-glycosyltransferase family. As to quaternary structure, homodimer. Homooligomer. Interacts with UGT1A1, UGT1A4, UGT1A6, UGT1A7, UGT1A8, UGT1A9 and UGT1A10 to form heterodimers. Isoform 1 interacts with isoform 2/i2 suggesting that oligomerization is involved in negative regulation of transferase activity by isoform 2. Isoform 1 also interacts with respective i2 isoforms of UGT1A1, UGT1A4, UGT1A6, UGT1A7, UGT1A8, UGT1A9 and UGT1A10. Expressed in liver, kidney, colon, esophagus and small intestine. As to expression, expressed in liver, kidney and colon. Not expressed in esophagus and small intestine.

It is found in the endoplasmic reticulum membrane. It catalyses the reaction glucuronate acceptor + UDP-alpha-D-glucuronate = acceptor beta-D-glucuronoside + UDP + H(+). It carries out the reaction 17beta-estradiol + UDP-alpha-D-glucuronate = 17beta-estradiol 3-O-(beta-D-glucuronate) + UDP + H(+). The enzyme catalyses 17beta-estradiol + UDP-alpha-D-glucuronate = 17beta-estradiol 17-O-(beta-D-glucuronate) + UDP + H(+). The catalysed reaction is 17alpha-estradiol + UDP-alpha-D-glucuronate = 17alpha-estradiol 3-O-(beta-D-glucuronate) + UDP + H(+). It catalyses the reaction estrone + UDP-alpha-D-glucuronate = estrone 3-O-(beta-D-glucuronate) + UDP + H(+). It carries out the reaction chenodeoxycholate + UDP-alpha-D-glucuronate = chenodeoxycholoyl-24-O-(beta-D-glucuronate) + UDP. The enzyme catalyses deoxycholate + UDP-alpha-D-glucuronate = deoxycholoyl-24-O-(beta-D-glucuronate) + UDP. The catalysed reaction is lithocholate + UDP-alpha-D-glucuronate = lithocholoyl-24-O-(beta-D-glucuronate) + UDP. It catalyses the reaction hyodeoxycholate + UDP-alpha-D-glucuronate = hyodeoxycholoyl-24-O-(beta-D-glucuronate) + UDP. It carries out the reaction hyocholate + UDP-alpha-D-glucuronate = hyocholoyl-24-O-(beta-D-glucuronate) + UDP. The enzyme catalyses calcidiol + UDP-alpha-D-glucuronate = calcidiol 25-O-(beta-D-glucuronide) + UDP + H(+). The catalysed reaction is (E)-ferulate + UDP-alpha-D-glucuronate = (E)-4-O-(beta-D-glucuronosyl)-ferulate + UDP + H(+). It catalyses the reaction (E)-ferulate + UDP-alpha-D-glucuronate = (E)-ferulic acid beta-D-glucuronate ester + UDP. It carries out the reaction losartan + UDP-alpha-D-glucuronate = losartan-2-N-beta-D-glucuronide + UDP. The enzyme catalyses candesartan + UDP-alpha-D-glucuronate = candesartan-2-N-beta-D-glucuronide + UDP. The catalysed reaction is zolasartan + UDP-alpha-D-glucuronate = zolarsartan-2-N-beta-D-glucuronide + UDP. Its function is as follows. UDP-glucuronosyltransferase (UGT) that catalyzes phase II biotransformation reactions in which lipophilic substrates are conjugated with glucuronic acid to increase the metabolite's water solubility, thereby facilitating excretion into either the urine or bile. Essential for the elimination and detoxification of drugs, xenobiotics and endogenous compounds. Catalyzes the glucuronidation of endogenous estrogen hormones such as estradiol and estrone. Contributes to bile acid (BA) detoxification by catalyzing the glucuronidation of BA substrates, which are natural detergents for dietary lipids absorption. Involved in the glucuronidation of calcidiol, which is the major circulating form of vitamin D3, essential for the regulation of calcium and phosphate homeostasis. Involved in the glucuronidation of the phytochemical ferulic acid at the phenolic or the carboxylic acid group. Involved in the glucuronidation of the AGTR1 angiotensin receptor antagonists losartan, candesartan and zolarsartan, which can inhibit the effect of angiotensin II. In terms of biological role, lacks UDP-glucuronosyltransferase (UGT) activity but acts as a negative regulator of isoform 1. The chain is UDP-glucuronosyltransferase 1A3 from Homo sapiens (Human).